Consider the following 252-residue polypeptide: 3-deoxy-manno-octulosonate cytidylyltransferase (252 aa).

This sequence belongs to the KdsB family.

The protein localises to the cytoplasm. It catalyses the reaction 3-deoxy-alpha-D-manno-oct-2-ulosonate + CTP = CMP-3-deoxy-beta-D-manno-octulosonate + diphosphate. It participates in nucleotide-sugar biosynthesis; CMP-3-deoxy-D-manno-octulosonate biosynthesis; CMP-3-deoxy-D-manno-octulosonate from 3-deoxy-D-manno-octulosonate and CTP: step 1/1. It functions in the pathway bacterial outer membrane biogenesis; lipopolysaccharide biosynthesis. Its function is as follows. Activates KDO (a required 8-carbon sugar) for incorporation into bacterial lipopolysaccharide in Gram-negative bacteria. This Thiobacillus denitrificans (strain ATCC 25259 / T1) protein is 3-deoxy-manno-octulosonate cytidylyltransferase.